Reading from the N-terminus, the 1040-residue chain is Multidrug resistance protein MdtB (1040 aa).

A run of 12 helical transmembrane segments spans residues 25–45 (LLMA…PVAA), 347–367 (LMLA…NIPA), 369–389 (IIPG…MVFL), 396–416 (LTLM…IVVI), 440–460 (IGFT…PLLF), 472–492 (FAVT…TLTP), 537–557 (WLTL…WIVI), 863–883 (LGST…VLGV), 888–908 (FIHP…ALLA), 910–930 (IIAG…LIGI), 968–988 (ILMT…STGV), and 998–1018 (IAMV…TPVI).

The protein belongs to the resistance-nodulation-cell division (RND) (TC 2.A.6) family. MdtB subfamily. Part of a tripartite efflux system composed of MdtA, MdtB and MdtC. MdtB forms a heteromultimer with MdtC.

The protein localises to the cell inner membrane. This is Multidrug resistance protein MdtB from Salmonella gallinarum (strain 287/91 / NCTC 13346).